Reading from the N-terminus, the 211-residue chain is MADS-box protein AGL72 (211 aa).

Residues 1-61 form the MADS-box domain; it reads MVRGKIEIKK…GRLYEFASSD (61 aa). Residues 88 to 187 form the K-box domain; the sequence is VQGLKKEMVT…LCQVGERPMG (100 aa).

The protein localises to the nucleus. Functionally, MADS-box transcription factor that acts with AGL42 and AGL71 in the control of flowering time. Promotes flowering at the shoot apical and axillary meristems. Seems to act through a gibberellin-dependent pathway. Interacts genetically with SOC1 and its expression is directly regulated by SOC1. In Arabidopsis thaliana (Mouse-ear cress), this protein is MADS-box protein AGL72 (AGL72).